Here is a 196-residue protein sequence, read N- to C-terminus: Holliday junction branch migration complex subunit RuvA (196 aa).

A domain I region spans residues 1–64 (MIDRLRGQLV…EDAMLLFGFA (64 aa)). The interval 65 to 143 (TREEREAFDA…AAAGGGGGVA (79 aa)) is domain II. The tract at residues 144-153 (AGEGDGPFME) is flexible linker. A domain III region spans residues 153-196 (EAREALTGLGYSLEEAERALRDVPPQETVEQYIKAALRKIGGRR).

The protein belongs to the RuvA family. As to quaternary structure, homotetramer. Forms an RuvA(8)-RuvB(12)-Holliday junction (HJ) complex. HJ DNA is sandwiched between 2 RuvA tetramers; dsDNA enters through RuvA and exits via RuvB. An RuvB hexamer assembles on each DNA strand where it exits the tetramer. Each RuvB hexamer is contacted by two RuvA subunits (via domain III) on 2 adjacent RuvB subunits; this complex drives branch migration. In the full resolvosome a probable DNA-RuvA(4)-RuvB(12)-RuvC(2) complex forms which resolves the HJ.

The protein localises to the cytoplasm. Its function is as follows. The RuvA-RuvB-RuvC complex processes Holliday junction (HJ) DNA during genetic recombination and DNA repair, while the RuvA-RuvB complex plays an important role in the rescue of blocked DNA replication forks via replication fork reversal (RFR). RuvA specifically binds to HJ cruciform DNA, conferring on it an open structure. The RuvB hexamer acts as an ATP-dependent pump, pulling dsDNA into and through the RuvAB complex. HJ branch migration allows RuvC to scan DNA until it finds its consensus sequence, where it cleaves and resolves the cruciform DNA. This is Holliday junction branch migration complex subunit RuvA from Rubrobacter xylanophilus (strain DSM 9941 / JCM 11954 / NBRC 16129 / PRD-1).